The sequence spans 476 residues: AAAAAGRGRSFSPAAPAPSSVRLPGRQAPAPAAASALAVEADPAADRVSSLSQVSGVLGSQWGDEGKGKLVDVLAPRFDIVARCQGGANAGHTIYNSEGKKFALHLVPSGILHEGTLCVVGNGAVIHVPGFFGEIDGLQSNGVSCDGRILVSDRAHLLFDLHQTVDGLREAELANSFIGTTKRGIGPCYSSKVTRNGLRVCDLRHMDTFGDKLDVLFEDAAARFEGFKYSKGMLKEEVERYKRFAERLEPFIADTVHVLNESIRQKKKILVEGGQATMLDIDFGTYPFVTSSSPSAGGICTGLGIAPRVIGDLIGVVKAYTTRVGSGPFPTELLGEEGDVLRKAGMEFGTTTGRPRRCGWLDIVALKYCCDINGFSSLNLTKLDVLSGLPEIKLGVSYNQMDGEKLQSFPGDLDTLEQVQVNYEVLPGWDSDISSVRSYSELPQAARRYVERIEELAGVPVHYIGVGPGRDALIYK.

Positions 1–20 (AAAAAGRGRSFSPAAPAPSS) are enriched in low complexity. A disordered region spans residues 1–34 (AAAAAGRGRSFSPAAPAPSSVRLPGRQAPAPAAA). GTP is bound by residues 63–69 (GDEGKGK) and 91–93 (GHT). Asp-64 functions as the Proton acceptor in the catalytic mechanism. Positions 64 and 91 each coordinate Mg(2+). IMP contacts are provided by residues 64 to 67 (DEGK), 89 to 92 (NAGH), Thr-181, Arg-195, Gln-275, Thr-290, and Arg-354. His-92 serves as the catalytic Proton donor. 350–356 (TTTGRPR) contributes to the substrate binding site. GTP-binding positions include Arg-356, 382 to 384 (KLD), and 465 to 467 (GVG).

This sequence belongs to the adenylosuccinate synthetase family. In terms of assembly, homodimer. Mg(2+) is required as a cofactor.

It is found in the plastid. Its subcellular location is the chloroplast. The catalysed reaction is IMP + L-aspartate + GTP = N(6)-(1,2-dicarboxyethyl)-AMP + GDP + phosphate + 2 H(+). It functions in the pathway purine metabolism; AMP biosynthesis via de novo pathway; AMP from IMP: step 1/2. Plays an important role in the de novo pathway and in the salvage pathway of purine nucleotide biosynthesis. Catalyzes the first committed step in the biosynthesis of AMP from IMP. The chain is Adenylosuccinate synthetase, chloroplastic from Triticum aestivum (Wheat).